The following is an 804-amino-acid chain: Phenylalanine--tRNA ligase beta subunit (804 aa).

The region spanning Gly-40–Leu-155 is the tRNA-binding domain. In terms of domain architecture, B5 spans Ile-409–Ser-484. Residues Asp-462, Asp-468, Glu-471, and Glu-472 each contribute to the Mg(2+) site. The 94-residue stretch at Pro-710–Arg-803 folds into the FDX-ACB domain.

It belongs to the phenylalanyl-tRNA synthetase beta subunit family. Type 1 subfamily. In terms of assembly, tetramer of two alpha and two beta subunits. Requires Mg(2+) as cofactor.

It is found in the cytoplasm. The catalysed reaction is tRNA(Phe) + L-phenylalanine + ATP = L-phenylalanyl-tRNA(Phe) + AMP + diphosphate + H(+). The polypeptide is Phenylalanine--tRNA ligase beta subunit (Bacillus licheniformis (strain ATCC 14580 / DSM 13 / JCM 2505 / CCUG 7422 / NBRC 12200 / NCIMB 9375 / NCTC 10341 / NRRL NRS-1264 / Gibson 46)).